Consider the following 68-residue polypeptide: Conotoxin Em11.5 (68 aa).

Residues Met-1 to Thr-26 form the signal peptide. 4 cysteine pairs are disulfide-bonded: Cys-29–Cys-43, Cys-36–Cys-48, Cys-42–Cys-52, and Cys-47–Cys-56. Phe-60 bears the Phenylalanine amide mark. Residues Ala-64–Glu-68 constitute a propeptide that is removed on maturation.

The protein belongs to the conotoxin I2 superfamily. In terms of tissue distribution, expressed by the venom duct.

Its subcellular location is the secreted. In Conus emaciatus (False virgin cone), this protein is Conotoxin Em11.5.